Consider the following 556-residue polypeptide: 2-succinyl-5-enolpyruvyl-6-hydroxy-3-cyclohexene-1-carboxylate synthase (556 aa).

This sequence belongs to the TPP enzyme family. MenD subfamily. As to quaternary structure, homodimer. The cofactor is Mg(2+). Mn(2+) serves as cofactor. It depends on thiamine diphosphate as a cofactor.

It catalyses the reaction isochorismate + 2-oxoglutarate + H(+) = 5-enolpyruvoyl-6-hydroxy-2-succinyl-cyclohex-3-ene-1-carboxylate + CO2. Its pathway is quinol/quinone metabolism; 1,4-dihydroxy-2-naphthoate biosynthesis; 1,4-dihydroxy-2-naphthoate from chorismate: step 2/7. It functions in the pathway quinol/quinone metabolism; menaquinone biosynthesis. Its function is as follows. Catalyzes the thiamine diphosphate-dependent decarboxylation of 2-oxoglutarate and the subsequent addition of the resulting succinic semialdehyde-thiamine pyrophosphate anion to isochorismate to yield 2-succinyl-5-enolpyruvyl-6-hydroxy-3-cyclohexene-1-carboxylate (SEPHCHC). The sequence is that of 2-succinyl-5-enolpyruvyl-6-hydroxy-3-cyclohexene-1-carboxylate synthase from Klebsiella pneumoniae subsp. pneumoniae (strain ATCC 700721 / MGH 78578).